Reading from the N-terminus, the 158-residue chain is MPKETGEKLIVQNKKARHDYAIEDKYEAGLALTGTEVKSLREGRASLSEAFISIDRRGEMWLEGANIPEYLNGTWNNHAPKRKRKLLLHRLQITKLARGIEAKGYTIVPLSLYFKDGRVKAEIALARGKKEFDKRQALREEQDKREALRAMRYANMRH.

This sequence belongs to the SmpB family.

Its subcellular location is the cytoplasm. Its function is as follows. Required for rescue of stalled ribosomes mediated by trans-translation. Binds to transfer-messenger RNA (tmRNA), required for stable association of tmRNA with ribosomes. tmRNA and SmpB together mimic tRNA shape, replacing the anticodon stem-loop with SmpB. tmRNA is encoded by the ssrA gene; the 2 termini fold to resemble tRNA(Ala) and it encodes a 'tag peptide', a short internal open reading frame. During trans-translation Ala-aminoacylated tmRNA acts like a tRNA, entering the A-site of stalled ribosomes, displacing the stalled mRNA. The ribosome then switches to translate the ORF on the tmRNA; the nascent peptide is terminated with the 'tag peptide' encoded by the tmRNA and targeted for degradation. The ribosome is freed to recommence translation, which seems to be the essential function of trans-translation. The chain is SsrA-binding protein from Bifidobacterium longum (strain DJO10A).